Consider the following 242-residue polypeptide: Ribosomal RNA small subunit methyltransferase G (242 aa).

S-adenosyl-L-methionine-binding positions include Gly-79, Phe-84, 130–131 (AE), and Arg-150.

Belongs to the methyltransferase superfamily. RNA methyltransferase RsmG family.

The protein localises to the cytoplasm. In terms of biological role, specifically methylates the N7 position of a guanine in 16S rRNA. The sequence is that of Ribosomal RNA small subunit methyltransferase G from Levilactobacillus brevis (strain ATCC 367 / BCRC 12310 / CIP 105137 / JCM 1170 / LMG 11437 / NCIMB 947 / NCTC 947) (Lactobacillus brevis).